A 316-amino-acid chain; its full sequence is Ribosomal RNA small subunit methyltransferase A (316 aa).

Positions 33, 35, 60, 81, 110, and 133 each coordinate S-adenosyl-L-methionine.

This sequence belongs to the class I-like SAM-binding methyltransferase superfamily. rRNA adenine N(6)-methyltransferase family. RsmA subfamily.

The protein resides in the cytoplasm. The catalysed reaction is adenosine(1518)/adenosine(1519) in 16S rRNA + 4 S-adenosyl-L-methionine = N(6)-dimethyladenosine(1518)/N(6)-dimethyladenosine(1519) in 16S rRNA + 4 S-adenosyl-L-homocysteine + 4 H(+). In terms of biological role, specifically dimethylates two adjacent adenosines (A1518 and A1519) in the loop of a conserved hairpin near the 3'-end of 16S rRNA in the 30S particle. May play a critical role in biogenesis of 30S subunits. The chain is Ribosomal RNA small subunit methyltransferase A from Corynebacterium jeikeium (strain K411).